The primary structure comprises 561 residues: Arginine--tRNA ligase (561 aa).

The 'HIGH' region motif lies at 128–138 (ANPTGPLHVGH).

Belongs to the class-I aminoacyl-tRNA synthetase family. In terms of assembly, monomer.

The protein localises to the cytoplasm. The enzyme catalyses tRNA(Arg) + L-arginine + ATP = L-arginyl-tRNA(Arg) + AMP + diphosphate. In Marinobacter nauticus (strain ATCC 700491 / DSM 11845 / VT8) (Marinobacter aquaeolei), this protein is Arginine--tRNA ligase.